Reading from the N-terminus, the 611-residue chain is Menin (611 aa).

Positions 214-390 are interaction with FANCD2; that stretch reads GVAERSWLYL…SLLETGEERT (177 aa). Residues 460-553 are disordered; it reads REAEAAEAEE…SPPPEGPVLT (94 aa). A compositionally biased stretch (basic and acidic residues) spans 484-500; sequence RRESKPEEPPPPKKPAL. Phosphoserine is present on residues S487 and S544. T595 bears the Phosphothreonine mark.

As to quaternary structure, component of the MLL-HCF complex, at least composed of KMT2A/MLL1, MEN1, ASH2L, RBBP5, DPY30, WDR5, HCFC1 and HCFC2. Component of the menin-associated histone methyltransferase complex, at least composed of KMT2B/MLL4, MEN1, ASH2L, RBBP5, DPY30 and WDR5. Interacts with POLR2B. Interacts with POLR2A phosphorylated at 'Ser-5', but not with the unphosphorylated, nor 'Ser-2' phosphorylated POLR2A forms. Interacts with FANCD2 and DBF4. Interacts with SMAD3, but not with SMAD2, nor SMAD4. Directly interacts with NFKB1, NFKB2 and RELA. Interacts with JUND (via MBM motif); inhibits the interaction of JUND with MAPK10 and the phosphorylation of JUND by MAP kinases MAPK8 and MAPK10. Interacts with KMT2A (via MBM motif). The KMT2A-MEN1 complex interacts with PSIP1 with a greater affinity as MEN1 enhances interaction of KMT2A with PSIP1. Widely expressed, with high levels in hippocampus, cerebral cortex, testis and thymus (at protein level). Also expressed at high levels in pancreatic islets, ovary and bone marrow. In the brain, highest expression in hippocampus pyramidal nerve cells (at protein level). In the testis, may be expressed in spermatogonia (at protein level). Low expression, if any, in skeletal muscle.

It is found in the nucleus. In terms of biological role, essential component of a MLL/SET1 histone methyltransferase (HMT) complex, a complex that specifically methylates 'Lys-4' of histone H3 (H3K4). Functions as a transcriptional regulator. Binds to the TERT promoter and represses telomerase expression. Plays a role in TGFB1-mediated inhibition of cell-proliferation, possibly regulating SMAD3 transcriptional activity. Represses JUND-mediated transcriptional activation on AP1 sites, as well as that mediated by NFKB subunit RELA. Positively regulates HOXC8 and HOXC6 gene expression. May be involved in normal hematopoiesis through the activation of HOXA9 expression. May be involved in DNA repair. The protein is Menin (Men1) of Mus musculus (Mouse).